The following is a 376-amino-acid chain: 23S rRNA (uracil(747)-C(5))-methyltransferase RlmC (376 aa).

[4Fe-4S] cluster-binding residues include cysteine 3, cysteine 11, cysteine 14, and cysteine 87. Positions 212, 241, 262, and 307 each coordinate S-adenosyl-L-methionine. The active-site Nucleophile is cysteine 334.

This sequence belongs to the class I-like SAM-binding methyltransferase superfamily. RNA M5U methyltransferase family. RlmC subfamily.

It catalyses the reaction uridine(747) in 23S rRNA + S-adenosyl-L-methionine = 5-methyluridine(747) in 23S rRNA + S-adenosyl-L-homocysteine + H(+). Catalyzes the formation of 5-methyl-uridine at position 747 (m5U747) in 23S rRNA. The protein is 23S rRNA (uracil(747)-C(5))-methyltransferase RlmC of Salmonella typhimurium (strain LT2 / SGSC1412 / ATCC 700720).